Reading from the N-terminus, the 26-residue chain is Ribulose bisphosphate carboxylase large chain (26 aa).

Residues 1-2 (MS) constitute a propeptide that is removed on maturation. Residue P3 is modified to N-acetylproline.

It belongs to the RuBisCO large chain family. Type I subfamily. In terms of assembly, heterohexadecamer of 8 large chains and 8 small chains.

The protein localises to the plastid. Its subcellular location is the chloroplast. It catalyses the reaction 2 (2R)-3-phosphoglycerate + 2 H(+) = D-ribulose 1,5-bisphosphate + CO2 + H2O. The enzyme catalyses D-ribulose 1,5-bisphosphate + O2 = 2-phosphoglycolate + (2R)-3-phosphoglycerate + 2 H(+). In terms of biological role, ruBisCO catalyzes two reactions: the carboxylation of D-ribulose 1,5-bisphosphate, the primary event in carbon dioxide fixation, as well as the oxidative fragmentation of the pentose substrate in the photorespiration process. Both reactions occur simultaneously and in competition at the same active site. The chain is Ribulose bisphosphate carboxylase large chain (rbcL) from Vicia faba (Broad bean).